The sequence spans 874 residues: Alanine--tRNA ligase (874 aa).

Residues His-564, His-568, Cys-665, and His-669 each contribute to the Zn(2+) site.

The protein belongs to the class-II aminoacyl-tRNA synthetase family. The cofactor is Zn(2+).

It localises to the cytoplasm. It catalyses the reaction tRNA(Ala) + L-alanine + ATP = L-alanyl-tRNA(Ala) + AMP + diphosphate. In terms of biological role, catalyzes the attachment of alanine to tRNA(Ala) in a two-step reaction: alanine is first activated by ATP to form Ala-AMP and then transferred to the acceptor end of tRNA(Ala). Also edits incorrectly charged Ser-tRNA(Ala) and Gly-tRNA(Ala) via its editing domain. This chain is Alanine--tRNA ligase, found in Cupriavidus necator (strain ATCC 17699 / DSM 428 / KCTC 22496 / NCIMB 10442 / H16 / Stanier 337) (Ralstonia eutropha).